The chain runs to 1112 residues: MDFPLPALLAIEDYDENEGKLAASIRWLISRVYEEKRDMPDKLRDGVQRDENGHFQIDEAVVGALCNGSLYAQAAAKIFKESALVTKGHGAVLAVLTDYGIDVLHDGNELVEEAQLVASAPFNMSAHLAIIDALMMAHLRDVIPVSRVVEAVSRHTAVEPSEKPIDSVDALLFWINKICLLVRDDVEREDSNTNIPEMEDLYEDISDGQCLCALLHWYRPHEMPVADISFNDSATTRDCQYNLMLLQLFCRHHLAVDPFHFEIEDLLYLRDSLQMNVNAFLADLFVQFEPPVTPEPVETPRIGPSPRRFVPASAIPDLRAANAAARSSMHNRNRPRMYNPPPAVSHSQGPSRSVSRMSQDSLFYSRPASIALQRRSMDQDSVTDFQTIRQGFENQAGTAQLNRYDGSVTASVRLAMEEKRRKHDQQMAQMSFSSANETERLEKSKAAFFALRKNDNDQTSKGKEEWYDHFEAKLRALELRVGLEEGEDGTQSARLNRASSQPSVVQAGQTYPANYMTLPMNAAAQMTQSYIQHPQTPHDYYMQQQMQQQQQQQAQAQSNYASPSQLRNSLSNGMINHAGYIVQSMYPGDYQQQQQQMQMQQGQMPVQPVGAYTPEGYFIPHHMQPIPVQQGYQQMPQPGMGFNGMPATSQPGFNMEGSPAQMGYIQTANKPLDMEMPMQQQPPQQPPQQMLPPNQNAFHLHSKSDDATQVQADPPLEINRNLTNWGMTYKQEMPARSIPSRRTWQNETFIKNELDLVNSKESVPHITDETTTQPEEAARRFPDLMLDNHSENLAPGRGFSRQNDRDDLSTGRKSDDSPTDTPGRTFDDDEGSGENMEKIANERRIAKKAALIAKTMKRKEEIETKVDLAEQRNAERRQVENEKKELALRKKVEKEQQRQKILDEYKRKKLEKELGAELSARSTGRGHSQPPFIRTKSQMSEVTESSRQNTPRMRGQSSVEQRVSVSSLAEPTHKLYAKTVTKSNRGLINNALQFSVFPGAVNNATRQATITQMASSSSKHFLILFRDQKCQYRGLYTWDEISDTAVKISGQGPPKCTEAMMNSMFKYDSGAKNFTNIATKHLSATIDGFAILDQYWQKARIPHSGTPAHKNN.

One can recognise a Calponin-homology (CH) domain in the interval 165–286 (IDSVDALLFW…VNAFLADLFV (122 aa)). 4 disordered regions span residues 324-358 (AARS…SRMS), 485-504 (EGED…QPSV), 542-566 (MQQQ…PSQL), and 788-834 (NHSE…GSGE). 2 stretches are compositionally biased toward polar residues: residues 345–358 (SHSQ…SRMS) and 489–504 (GTQS…QPSV). Residues 542–557 (MQQQMQQQQQQQAQAQ) are compositionally biased toward low complexity. Residues 802-816 (QNDRDDLSTGRKSDD) show a composition bias toward basic and acidic residues. Positions 850–914 (ALIAKTMKRK…YKRKKLEKEL (65 aa)) form a coiled coil. The tract at residues 916-965 (AELSARSTGRGHSQPPFIRTKSQMSEVTESSRQNTPRMRGQSSVEQRVSV) is disordered. Residues 935 to 951 (TKSQMSEVTESSRQNTP) show a composition bias toward polar residues. Positions 956 to 965 (QSSVEQRVSV) are enriched in low complexity. Residues 972-1109 (THKLYAKTVT…RIPHSGTPAH (138 aa)) form the CKK domain.

This sequence belongs to the CAMSAP1 family. Interacts with dapk-1. As to expression, expressed in larval and adult epidermis, intestine and pharynx. Broadly expressed in the nervous system. Expressed in body wall muscle cells.

The protein resides in the cell projection. It localises to the axon. The protein localises to the dendrite. Its subcellular location is the cell membrane. It is found in the sarcolemma. The protein resides in the cytoplasm. It localises to the cytosol. The protein localises to the cytoskeleton. Its subcellular location is the perikaryon. Required for microtubule stability and anchorage by binding to the minus ends of microtubules. Acts redundantly with noca-1 to control circumferential microtubule assembly along the body which is necessary for larval development, viability, morphology and integrity of the epidermis. Promotes microtubule stability and polymerization in neurons. Involved in the maintenance of neurite morphology in ALM and PLM neurons. May play a role in synaptic protein localization in the PLM neuron. May act upstream of dlk-1 in neuronal regeneration. Plays a role in postembryonic epidermal tissue integrity and wound healing. The protein is Patronin (microtubule-binding protein) homolog of Caenorhabditis elegans.